Reading from the N-terminus, the 260-residue chain is G patch domain-containing protein 11 (260 aa).

Positions 25 to 61 form a coiled coil; it reads MLRQIREARRKEEKRQEANLKNRQKSIKEEEQERRDM. A disordered region spans residues 33–60; that stretch reads RRKEEKRQEANLKNRQKSIKEEEQERRD. One can recognise a G-patch domain in the interval 69–115; it reads CENKGFALLQKMGYKSGQALGKSGDGIVEPIPLNVKTGKSGIGHETL. N6-acetyllysine is present on Lys123. The tract at residues 187–212 is disordered; sequence WLRPEEETEEETEEEKEQDEDEYKSE. The segment covering 192-210 has biased composition (acidic residues); that stretch reads EETEEETEEEKEQDEDEYK.

Belongs to the GPATCH11 family.

It localises to the chromosome. It is found in the centromere. The protein localises to the kinetochore. This is G patch domain-containing protein 11 (GPATCH11) from Bos taurus (Bovine).